A 361-amino-acid polypeptide reads, in one-letter code: Spermidine/putrescine import ATP-binding protein PotA (361 aa).

The region spanning 7–241 is the ABC transporter domain; it reads IEVRNVSKRY…PQHRFVAQFI (235 aa). 43–50 contributes to the ATP binding site; the sequence is GPSGCGKT.

It belongs to the ABC transporter superfamily. Spermidine/putrescine importer (TC 3.A.1.11.1) family. As to quaternary structure, the complex is composed of two ATP-binding proteins (PotA), two transmembrane proteins (PotB and PotC) and a solute-binding protein (PotD).

It is found in the cell inner membrane. The catalysed reaction is ATP + H2O + polyamine-[polyamine-binding protein]Side 1 = ADP + phosphate + polyamineSide 2 + [polyamine-binding protein]Side 1.. Functionally, part of the ABC transporter complex PotABCD involved in spermidine/putrescine import. Responsible for energy coupling to the transport system. The chain is Spermidine/putrescine import ATP-binding protein PotA from Pseudomonas fluorescens (strain Pf0-1).